A 388-amino-acid polypeptide reads, in one-letter code: Ribonuclease D (388 aa).

A 3'-5' exonuclease domain is found at 24–191 (QYVSDEASLN…LYPQLADKLK (168 aa)). In terms of domain architecture, HRDC spans 230-310 (TEHQLAYLKV…QTADLSNPPE (81 aa)).

Belongs to the RNase D family. Requires a divalent metal cation as cofactor.

Its subcellular location is the cytoplasm. The enzyme catalyses Exonucleolytic cleavage that removes extra residues from the 3'-terminus of tRNA to produce 5'-mononucleotides.. Exonuclease involved in the 3' processing of various precursor tRNAs. Initiates hydrolysis at the 3'-terminus of an RNA molecule and releases 5'-mononucleotides. This is Ribonuclease D from Shewanella sp. (strain ANA-3).